Here is a 222-residue protein sequence, read N- to C-terminus: Uracil-DNA glycosylase (222 aa).

Asp-61 (proton acceptor) is an active-site residue.

It belongs to the uracil-DNA glycosylase (UDG) superfamily. UNG family.

The protein resides in the cytoplasm. The catalysed reaction is Hydrolyzes single-stranded DNA or mismatched double-stranded DNA and polynucleotides, releasing free uracil.. Functionally, excises uracil residues from the DNA which can arise as a result of misincorporation of dUMP residues by DNA polymerase or due to deamination of cytosine. The sequence is that of Uracil-DNA glycosylase from Aeromonas hydrophila subsp. hydrophila (strain ATCC 7966 / DSM 30187 / BCRC 13018 / CCUG 14551 / JCM 1027 / KCTC 2358 / NCIMB 9240 / NCTC 8049).